Here is an 85-residue protein sequence, read N- to C-terminus: Small ribosomal subunit protein bS20 (85 aa).

Belongs to the bacterial ribosomal protein bS20 family.

Its function is as follows. Binds directly to 16S ribosomal RNA. In Borrelia garinii subsp. bavariensis (strain ATCC BAA-2496 / DSM 23469 / PBi) (Borreliella bavariensis), this protein is Small ribosomal subunit protein bS20.